The following is an 861-amino-acid chain: Cone cGMP-specific 3',5'-cyclic phosphodiesterase subunit alpha' (861 aa).

2 consecutive GAF domains span residues 75-224 and 256-433; these read SAEQ…AVAL and DVER…GWSL. 3',5'-cyclic GMP contacts are provided by residues Ser-97, Asn-116, 169–172, and Thr-176; that span reads DKQT. Residues 486–819 form the PDEase domain; the sequence is EERQLLAILK…VEWKSLAEEY (334 aa). Residue His-562 is the Proton donor of the active site. 4 residues coordinate a divalent metal cation: His-566, His-602, Asp-603, and Asp-723. Positions 826-839 are enriched in basic and acidic residues; it reads TEEEAGKQEEEASD. Residues 826–861 form a disordered region; the sequence is TEEEAGKQEEEASDGKAATDLGGSAEDKKSKTCLML. Position 858 is a cysteine methyl ester (Cys-858). Cys-858 carries the S-geranylgeranyl cysteine lipid modification. A propeptide spans 859–861 (removed in mature form); the sequence is LML.

It belongs to the cyclic nucleotide phosphodiesterase family. Composed of two alpha' subunits that are associated with 3 smaller proteins of 11, 13, and 15 kDa. The cofactor is a divalent metal cation.

The protein resides in the cell membrane. The enzyme catalyses 3',5'-cyclic GMP + H2O = GMP + H(+). Its function is as follows. As cone-specific cGMP phosphodiesterase, it plays an essential role in light detection and cone phototransduction by rapidly decreasing intracellular levels of cGMP. This Mus musculus (Mouse) protein is Cone cGMP-specific 3',5'-cyclic phosphodiesterase subunit alpha' (Pde6c).